The chain runs to 784 residues: Cadherin-5 (784 aa).

The signal sequence occupies residues 1–24 (MQRLTELATALGAFLGLLAVAAMA). Residues 25 to 45 (GPNFPQIDTPNMLPAHHRQKR) constitute a propeptide that is removed on maturation. Cadherin domains lie at 46–149 (DWIW…WPVF), 150–256 (SHQV…FPVF), 257–371 (TQST…PPVF), 372–476 (QRHF…DNPP), and 477–593 (EFAQ…MAAQ). The Extracellular segment spans residues 46–599 (DWIWNQMHID…MAAQAGVSIQ (554 aa)). Ca(2+)-binding residues include E56 and E57. Residue N59 is glycosylated (N-linked (GlcNAc...) asparagine). Ca(2+) contacts are provided by D107, E109, D141, I142, N143, D144, and N145. A glycan (N-linked (GlcNAc...) asparagine) is linked at N155. Positions 175, 177, 184, and 229 each coordinate Ca(2+). 3 N-linked (GlcNAc...) asparagine glycosylation sites follow: N441, N523, and N535. The helical transmembrane segment at 600–620 (ALVAIFLCILTITVITLLIIL) threads the bilayer. Positions 621 to 660 (RRRIRKQAHAHSKSALEIHEQLVTYDEEGGGEMDTTSYDV) are required for interaction with PALS1. Over 621–784 (RRRIRKQAHA…GSDPQEELII (164 aa)) the chain is Cytoplasmic.

As to quaternary structure, part of a complex composed of AMOTL2, MAGI1 and CDH5, within the complex AMOTL2 acts as a scaffold protein for the interaction of MAGI1 with CDH5. The complex is required for coupling actin fibers to cell junctions in endothelial cells. Within the complex AMOTL2 (via its N-terminus) interacts with CDH5. Interacts (via cadherin 5 domain) with PTPRB. Interacts with TRPC4. Interacts with KRIT1. Interacts with PARD3. Interacts with RTN4 (isoform B). Interacts with PALS1; the interaction promotes PALS1 localization to cell junctions and is required for CDH5-mediated vascular lumen formation and endothelial cell polarity. Interacts with CTNND1/p120-catenin; the interaction controls CADH5 endocytosis. Phosphorylated on tyrosine residues by KDR/VEGFR-2. Dephosphorylated by PTPRB. Post-translationally, O-glycosylated. As to expression, expressed in postnatal endothelial cells of the retinal vascular plexus (at protein level).

It localises to the cell junction. The protein resides in the adherens junction. It is found in the cell membrane. Its subcellular location is the cytoplasm. Functionally, cadherins are calcium-dependent cell adhesion proteins. They preferentially interact with themselves in a homophilic manner in connecting cells; cadherins may thus contribute to the sorting of heterogeneous cell types. This cadherin may play an important role in endothelial cell biology through control of the cohesion and organization of the intercellular junctions. It associates with alpha-catenin forming a link to the cytoskeleton. Plays a role in coupling actin fibers to cell junctions in endothelial cells, via acting as a cell junctional complex anchor for AMOTL2 and MAGI1. Acts in concert with KRIT1 and PALS1 to establish and maintain correct endothelial cell polarity and vascular lumen. These effects are mediated by recruitment and activation of the Par polarity complex and RAP1B. Required for activation of PRKCZ and for localization of phosphorylated PRKCZ, PARD3, TIAM1 and RAP1B to the cell junction. Associates with CTNND1/p120-catenin to control CADH5 endocytosis. In Mus musculus (Mouse), this protein is Cadherin-5.